Here is a 1025-residue protein sequence, read N- to C-terminus: Kinesin-like protein KIN-14P (1025 aa).

2 disordered regions span residues 1–87 and 263–286; these read MNPM…MHHG and YSQI…NEEE. Positions 15–28 are enriched in low complexity; sequence STPRSPFSPFSPLS. Over residues 29-41 the composition is skewed to basic and acidic residues; that stretch reads VDDRHRNHADTKT. A compositionally biased stretch (low complexity) spans 42–53; sequence PRSPFSPFSPLS. A compositionally biased stretch (polar residues) spans 65–75; the sequence is KFQQALASSGQ. Residues 203–425 adopt a coiled-coil conformation; it reads HEIATQQLRQ…REMEKKSESN (223 aa). Positions 270–286 are enriched in basic and acidic residues; it reads TKTEKSKWEEQKKNEEE. One can recognise a Kinesin motor domain in the interval 509–838; sequence NIRVFCRVRP…LKFAERVSGV (330 aa). Residue 593–600 participates in ATP binding; sequence GQTGSGKT. A coiled-coil region spans residues 847–879; it reads KEGKDVRDLMEQLASLKDTIARKDEEIERLQHQ. Disordered regions lie at residues 881–926, 939–977, and 994–1025; these read QRLQ…SAEA, AASM…RPLD, and TGLT…KRWA. Composition is skewed to polar residues over residues 901–913 and 939–948; these read SDTG…SRYS and AASMGTQGSI. A compositionally biased stretch (basic and acidic residues) spans 950–962; it reads VTKRPPRISDRAK. 2 stretches are compositionally biased toward low complexity: residues 963 to 974 and 998 to 1016; these read SVTAKSSTSVTR and SSSK…STSS.

It belongs to the TRAFAC class myosin-kinesin ATPase superfamily. Kinesin family. KIN-14 subfamily.

The protein is Kinesin-like protein KIN-14P of Arabidopsis thaliana (Mouse-ear cress).